The chain runs to 191 residues: MAKSVPAIFLDRDGTINVDHGYVHEIDNFEFIDGVIDAMRELKKMGFALVVVTNQSGIARGKFTEAQFETLTEWMDWSLADRDVDLDGIYYCPHHPQGSVEEFRQVCDCRKPHPGMLLSARDYLHIDMAASYMVGDKLEDMQAAVAANVGTKVLVRTGKPITPEAENAADWVLNSLADLPQAIKKQQKPAQ.

The Nucleophile role is filled by Asp11. Mg(2+) contacts are provided by Asp11 and Asp13. Substrate contacts are provided by residues 11-13 (DRD), 19-22 (DHGY), and 53-56 (TNQS). The active-site Proton donor is the Asp13. Zn(2+) is bound by residues Cys92, His94, Cys107, and Cys109. 110–111 (RK) contacts substrate. Mg(2+) is bound by residues Asp136 and Lys137. Lys137 is a binding site for substrate.

This sequence belongs to the GmhB family. In terms of assembly, monomer. Requires Mg(2+) as cofactor. Zn(2+) serves as cofactor.

The protein localises to the cytoplasm. It carries out the reaction D-glycero-beta-D-manno-heptose 1,7-bisphosphate + H2O = D-glycero-beta-D-manno-heptose 1-phosphate + phosphate. It functions in the pathway nucleotide-sugar biosynthesis; ADP-L-glycero-beta-D-manno-heptose biosynthesis; ADP-L-glycero-beta-D-manno-heptose from D-glycero-beta-D-manno-heptose 7-phosphate: step 2/4. The protein operates within bacterial outer membrane biogenesis; LPS core biosynthesis. Functionally, converts the D-glycero-beta-D-manno-heptose 1,7-bisphosphate intermediate into D-glycero-beta-D-manno-heptose 1-phosphate by removing the phosphate group at the C-7 position. In Escherichia coli O157:H7, this protein is D-glycero-beta-D-manno-heptose-1,7-bisphosphate 7-phosphatase (gmhB).